An 862-amino-acid polypeptide reads, in one-letter code: Protein argonaute-2 (862 aa).

The PAZ domain occupies 232–351 (PVIEFMCEVL…LPLEVCNIVA (120 aa)). Interaction with guide RNA stretches follow at residues 314–319 (YFKDRH) and 527–569 (GKTP…LCLK). The Piwi domain maps to 520-821 (LVVVILPGKT…VAFRARYHLV (302 aa)). The segment at 590–593 (FQQP) is interaction with GW182 family members. An a divalent metal cation-binding site is contributed by D600. The interaction with GW182 family members stretch occupies residues 653–663 (LIQFYKSTRFK). D672 is an a divalent metal cation binding site. Interaction with guide RNA regions lie at residues 712-713 (KR), 756-764 (HAGIQGTSR), and 793-815 (YVRC…VAFR). Residue H810 participates in a divalent metal cation binding. The interval 825–847 (HDSAEGSHTSGQSNGRDQQALAK) is disordered. Residues 830 to 841 (GSHTSGQSNGRD) show a composition bias toward polar residues.

Belongs to the argonaute family. Ago subfamily. In terms of assembly, component of the RISC loading complex (RLC), or micro-RNA (miRNA) loading complex (miRLC), which is composed of dicer1, ago2 and tarbp2. Note that the trimeric RLC/miRLC is also referred to as RISC. It depends on Mg(2+) as a cofactor. Mn(2+) is required as a cofactor.

The protein localises to the cytoplasm. It is found in the P-body. It carries out the reaction Endonucleolytic cleavage to 5'-phosphomonoester.. Its function is as follows. Required for RNA-mediated gene silencing (RNAi) by the RNA-induced silencing complex (RISC). The 'minimal RISC' appears to include ago2 bound to a short guide RNA such as a microRNA (miRNA) or short interfering RNA (siRNA). These guide RNAs direct RISC to complementary mRNAs that are targets for RISC-mediated gene silencing. The precise mechanism of gene silencing depends on the degree of complementarity between the miRNA or siRNA and its target. Binding of RISC to a perfectly complementary mRNA generally results in silencing due to endonucleolytic cleavage of the mRNA specifically by ago2. Binding of RISC to a partially complementary mRNA results in silencing through inhibition of translation, and this is independent of endonuclease activity. The inhibition of translational initiation leads to the accumulation of the affected mRNA in cytoplasmic processing bodies (P-bodies), where mRNA degradation may subsequently occur. The polypeptide is Protein argonaute-2 (ago2) (Xenopus laevis (African clawed frog)).